The following is a 125-amino-acid chain: Holo-[acyl-carrier-protein] synthase (125 aa).

Mg(2+)-binding residues include Asp8 and Glu57.

It belongs to the P-Pant transferase superfamily. AcpS family. The cofactor is Mg(2+).

The protein resides in the cytoplasm. It carries out the reaction apo-[ACP] + CoA = holo-[ACP] + adenosine 3',5'-bisphosphate + H(+). Functionally, transfers the 4'-phosphopantetheine moiety from coenzyme A to a Ser of acyl-carrier-protein. The protein is Holo-[acyl-carrier-protein] synthase of Nitrosomonas eutropha (strain DSM 101675 / C91 / Nm57).